Reading from the N-terminus, the 1357-residue chain is DNA-directed RNA polymerase subunit beta (1357 aa).

The protein belongs to the RNA polymerase beta chain family. As to quaternary structure, the RNAP catalytic core consists of 2 alpha, 1 beta, 1 beta' and 1 omega subunit. When a sigma factor is associated with the core the holoenzyme is formed, which can initiate transcription.

It catalyses the reaction RNA(n) + a ribonucleoside 5'-triphosphate = RNA(n+1) + diphosphate. In terms of biological role, DNA-dependent RNA polymerase catalyzes the transcription of DNA into RNA using the four ribonucleoside triphosphates as substrates. The sequence is that of DNA-directed RNA polymerase subunit beta from Pseudomonas entomophila (strain L48).